The primary structure comprises 255 residues: NAD kinase (255 aa).

The active-site Proton acceptor is Asp-44. NAD(+) is bound by residues 44-45 (DG), His-49, 114-115 (NE), Asp-144, Ala-152, 155-160 (SAYNLS), and Gln-216.

The protein belongs to the NAD kinase family. A divalent metal cation serves as cofactor.

It is found in the cytoplasm. The catalysed reaction is NAD(+) + ATP = ADP + NADP(+) + H(+). Its function is as follows. Involved in the regulation of the intracellular balance of NAD and NADP, and is a key enzyme in the biosynthesis of NADP. Catalyzes specifically the phosphorylation on 2'-hydroxyl of the adenosine moiety of NAD to yield NADP. In Rickettsia africae (strain ESF-5), this protein is NAD kinase.